A 376-amino-acid polypeptide reads, in one-letter code: MARVEL domain-containing protein 3 (376 aa).

Positions 1-95 are enriched in basic and acidic residues; the sequence is MKNTSGHREP…EKSRQSRARP (95 aa). Residues 1 to 134 form a disordered region; the sequence is MKNTSGHREP…GRRGLESERA (134 aa). At 1 to 173 the chain is on the cytoplasmic side; sequence MKNTSGHREP…HKCRYLCTGR (173 aa). One can recognise an MARVEL domain in the interval 168 to 361; it reads YLCTGRACWQ…GAVLAFRGYR (194 aa). The chain crosses the membrane as a helical span at residues 174 to 194; it reads ACWQMLKALLNLLILACSSVS. The Extracellular segment spans residues 195 to 247; it reads YNSTGGYTGITSLGGIYYYQYGGAYSGFDGADGERAQQLDVQFYQLKLPTVTA. A helical membrane pass occupies residues 248–268; the sequence is AMAYSGALMTFSCLTLLAGAL. The Cytoplasmic portion of the chain corresponds to 269–275; it reads RVPWHCP. The chain crosses the membrane as a helical span at residues 276–296; it reads LWLVIEGLMDALIAGAYVPGL. Over 297–335 the chain is Extracellular; that stretch reads YFFFQHLSAAYSSDVCKERETLYQSKGYSGFNCGVHGGD. A helical transmembrane segment spans residues 336–356; sequence IGAGVFAAMAIGVFAVGAVLA. Topologically, residues 357 to 376 are cytoplasmic; it reads FRGYRKVKKLKEKPTEMLEF.

Widely expressed with highest levels in small intestine, colon, stomach and lung. Liver expresses only isoform 2.

The protein resides in the membrane. It localises to the cell junction. It is found in the tight junction. Functionally, as a component of tight junctions, plays a role in paracellular ion conductivity. This Mus musculus (Mouse) protein is MARVEL domain-containing protein 3 (Marveld3).